Reading from the N-terminus, the 307-residue chain is Protoheme IX farnesyltransferase (307 aa).

8 consecutive transmembrane segments (helical) span residues isoleucine 24 to valine 44, proline 52 to leucine 72, valine 115 to phenylalanine 135, isoleucine 152 to glycine 172, valine 179 to tyrosine 199, glutamine 224 to glutamate 244, alanine 245 to valine 265, and phenylalanine 284 to valine 304.

The protein belongs to the UbiA prenyltransferase family. Protoheme IX farnesyltransferase subfamily.

The protein localises to the cell inner membrane. The catalysed reaction is heme b + (2E,6E)-farnesyl diphosphate + H2O = Fe(II)-heme o + diphosphate. It functions in the pathway porphyrin-containing compound metabolism; heme O biosynthesis; heme O from protoheme: step 1/1. Functionally, converts heme B (protoheme IX) to heme O by substitution of the vinyl group on carbon 2 of heme B porphyrin ring with a hydroxyethyl farnesyl side group. This Azorhizobium caulinodans (strain ATCC 43989 / DSM 5975 / JCM 20966 / LMG 6465 / NBRC 14845 / NCIMB 13405 / ORS 571) protein is Protoheme IX farnesyltransferase.